Here is a 250-residue protein sequence, read N- to C-terminus: PF03932 family protein CutC (250 aa).

This sequence belongs to the CutC family.

Its subcellular location is the cytoplasm. The chain is PF03932 family protein CutC from Vibrio vulnificus (strain YJ016).